Consider the following 123-residue polypeptide: Immunoglobulin lambda variable 5-39 (123 aa).

The N-terminal stretch at 1-19 (MAWTPLLLLLLSHCTGSLS) is a signal peptide. A framework-1 region spans residues 20–44 (QPVLTQPTSLSASPGASARFTCTLR). The Ig-like domain occupies 21–123 (PVLTQPTSLS…YCAIWYSSTS (103 aa)). The cysteines at positions 41 and 115 are disulfide-linked. The interval 45-53 (SGINVGTYR) is complementarity-determining-1. A framework-2 region spans residues 54–70 (IYWYQQKPGSLPRYLLR). The complementarity-determining-2 stretch occupies residues 71–77 (YKSDSDK). The interval 78 to 115 (QQGSGVPSRFSGSKDASTNAGLLLISGLQSEDEADYYC) is framework-3. Positions 116–123 (AIWYSSTS) are complementarity-determining-3.

Immunoglobulins are composed of two identical heavy chains and two identical light chains; disulfide-linked.

The protein resides in the secreted. It localises to the cell membrane. Functionally, v region of the variable domain of immunoglobulin light chains that participates in the antigen recognition. Immunoglobulins, also known as antibodies, are membrane-bound or secreted glycoproteins produced by B lymphocytes. In the recognition phase of humoral immunity, the membrane-bound immunoglobulins serve as receptors which, upon binding of a specific antigen, trigger the clonal expansion and differentiation of B lymphocytes into immunoglobulins-secreting plasma cells. Secreted immunoglobulins mediate the effector phase of humoral immunity, which results in the elimination of bound antigens. The antigen binding site is formed by the variable domain of one heavy chain, together with that of its associated light chain. Thus, each immunoglobulin has two antigen binding sites with remarkable affinity for a particular antigen. The variable domains are assembled by a process called V-(D)-J rearrangement and can then be subjected to somatic hypermutations which, after exposure to antigen and selection, allow affinity maturation for a particular antigen. The protein is Immunoglobulin lambda variable 5-39 of Homo sapiens (Human).